The sequence spans 386 residues: Coproporphyrinogen-III oxidase 1, chloroplastic (386 aa).

Residues 1–48 constitute a chloroplast transit peptide; the sequence is MASHSSTLLSSPTFAPFSSHRLHYSPNPSTLRFSRPIRNKPNLALRCS. The tract at residues 125-134 is important for dimerization; sequence VLQDGNVFEK. Serine 174 contributes to the substrate binding site. Histidine 188 functions as the Proton donor in the catalytic mechanism. Substrate-binding positions include 190–192 and 344–349; these read NYR and GGRIES. The tract at residues 326–361 is important for dimerization; it reads YVEFNLVYDRGTTFGLKTGGRIESILVSLPLSARWE.

It belongs to the aerobic coproporphyrinogen-III oxidase family. Homodimer. As to expression, expressed in cotyledons, leaves and roots.

It localises to the plastid. Its subcellular location is the chloroplast. The catalysed reaction is coproporphyrinogen III + O2 + 2 H(+) = protoporphyrinogen IX + 2 CO2 + 2 H2O. It functions in the pathway porphyrin-containing compound metabolism; protoporphyrin-IX biosynthesis; protoporphyrinogen-IX from coproporphyrinogen-III (O2 route): step 1/1. Its pathway is porphyrin-containing compound metabolism; chlorophyll biosynthesis. Functionally, key enzyme in heme biosynthesis. Catalyzes the oxidative decarboxylation of propionic acid side chains of rings A and B of coproporphyrinogen III. This chain is Coproporphyrinogen-III oxidase 1, chloroplastic (CPX1), found in Arabidopsis thaliana (Mouse-ear cress).